Consider the following 549-residue polypeptide: TBC1 domain family member 3I (549 aa).

Residues 101–293 (GMPMNIRGPM…RLWDVYLVEG (193 aa)) form the Rab-GAP TBC domain. 2 S-palmitoyl cysteine lipidation sites follow: Cys318 and Cys325. Disordered stretches follow at residues 350-443 (LTRK…QGGP) and 507-526 (AAPS…DEQQ). Low complexity predominate over residues 398–417 (PRPIWSASPPRAPRSSTPCP).

Post-translationally, ubiquitinated by a CUL7-based E3 ligase, which leads to proteasomal degradation. Palmitoylation is required for membrane localization and protects TBC1D3 from ubiquitination.

It localises to the cell membrane. Functionally, acts as a GTPase activating protein for RAB5. Does not act on RAB4 or RAB11. The protein is TBC1 domain family member 3I of Homo sapiens (Human).